Reading from the N-terminus, the 287-residue chain is Bifunctional protein FolD (287 aa).

NADP(+)-binding positions include 165-167 (GRS), Ser190, and Ile231.

It belongs to the tetrahydrofolate dehydrogenase/cyclohydrolase family. As to quaternary structure, homodimer.

It carries out the reaction (6R)-5,10-methylene-5,6,7,8-tetrahydrofolate + NADP(+) = (6R)-5,10-methenyltetrahydrofolate + NADPH. The enzyme catalyses (6R)-5,10-methenyltetrahydrofolate + H2O = (6R)-10-formyltetrahydrofolate + H(+). Its pathway is one-carbon metabolism; tetrahydrofolate interconversion. Functionally, catalyzes the oxidation of 5,10-methylenetetrahydrofolate to 5,10-methenyltetrahydrofolate and then the hydrolysis of 5,10-methenyltetrahydrofolate to 10-formyltetrahydrofolate. In Carboxydothermus hydrogenoformans (strain ATCC BAA-161 / DSM 6008 / Z-2901), this protein is Bifunctional protein FolD.